The following is a 272-amino-acid chain: Indole-3-glycerol phosphate synthase (272 aa).

This sequence belongs to the TrpC family.

The catalysed reaction is 1-(2-carboxyphenylamino)-1-deoxy-D-ribulose 5-phosphate + H(+) = (1S,2R)-1-C-(indol-3-yl)glycerol 3-phosphate + CO2 + H2O. The protein operates within amino-acid biosynthesis; L-tryptophan biosynthesis; L-tryptophan from chorismate: step 4/5. The sequence is that of Indole-3-glycerol phosphate synthase from Mycobacterium tuberculosis (strain ATCC 25177 / H37Ra).